The chain runs to 513 residues: Proline-rich receptor-like protein kinase PERK3 (513 aa).

At 1–123 (MARSNRCVPQ…SPPSPSRLST (123 aa)) the chain is on the extracellular side. A glycan (N-linked (GlcNAc...) asparagine) is linked at Asn11. Polar residues predominate over residues 27–36 (LKSRWQQITM). The tract at residues 27–119 (LKSRWQQITM…GFSLSPPSPS (93 aa)) is disordered. Residue Asn66 is glycosylated (N-linked (GlcNAc...) asparagine). Residues 78 to 89 (PSTSTPPRLGNR) show a composition bias toward low complexity. A compositionally biased stretch (polar residues) spans 99 to 111 (GQEPTTPTMTPGF). A helical membrane pass occupies residues 124–144 (GAVVGISIGGGVFVLTLIFFL). The Cytoplasmic segment spans residues 145–513 (CKKKRPRDDK…TAQRYGGDSL (369 aa)). Phosphothreonine is present on Thr172. Residues 183–334 (FSEANLLGEG…DFGLAKIALD (152 aa)) form the Protein kinase domain. ATP is bound by residues 189–197 (LGEGGFGFV) and Lys211. The residue at position 256 (Tyr256) is a Phosphotyrosine. The active-site Proton acceptor is Asp307. Ser340 carries the phosphoserine modification. 2 positions are modified to phosphothreonine: Thr341 and Thr346. A Phosphotyrosine modification is found at Tyr354.

It belongs to the protein kinase superfamily. Ser/Thr protein kinase family. In terms of tissue distribution, expressed at low levels in inflorescence bolt, flower buds, siliques, roots, seedlings and leaves.

It localises to the cell membrane. It carries out the reaction L-seryl-[protein] + ATP = O-phospho-L-seryl-[protein] + ADP + H(+). The catalysed reaction is L-threonyl-[protein] + ATP = O-phospho-L-threonyl-[protein] + ADP + H(+). In Arabidopsis thaliana (Mouse-ear cress), this protein is Proline-rich receptor-like protein kinase PERK3 (PERK3).